The sequence spans 332 residues: ATPase GET3 (332 aa).

32–39 (KGGVGKTT) contributes to the ATP binding site. The active site involves Asp-61. The ATP site is built by Glu-235 and Asn-262. Residues Cys-273 and Cys-276 each coordinate Zn(2+).

It belongs to the arsA ATPase family. In terms of assembly, homodimer.

Its subcellular location is the cytoplasm. The protein localises to the endoplasmic reticulum. In terms of biological role, ATPase required for the post-translational delivery of tail-anchored (TA) proteins to the endoplasmic reticulum. Recognizes and selectively binds the transmembrane domain of TA proteins in the cytosol. This complex then targets to the endoplasmic reticulum by membrane-bound receptors, where the tail-anchored protein is released for insertion. This process is regulated by ATP binding and hydrolysis. ATP binding drives the homodimer towards the closed dimer state, facilitating recognition of newly synthesized TA membrane proteins. ATP hydrolysis is required for insertion. Subsequently, the homodimer reverts towards the open dimer state, lowering its affinity for the membrane-bound receptor, and returning it to the cytosol to initiate a new round of targeting. The polypeptide is ATPase GET3 (Mycosarcoma maydis (Corn smut fungus)).